The sequence spans 250 residues: Probable phosphatase VPA1527 (250 aa).

9 residues coordinate Zn(2+): His-8, His-10, His-16, His-41, Glu-74, His-102, His-132, Asp-194, and His-196.

The protein belongs to the PHP family. The cofactor is Zn(2+).

The polypeptide is Probable phosphatase VPA1527 (Vibrio parahaemolyticus serotype O3:K6 (strain RIMD 2210633)).